Reading from the N-terminus, the 406-residue chain is 4-hydroxy-3-methylbut-2-en-1-yl diphosphate synthase (ferredoxin) (406 aa).

4 residues coordinate [4Fe-4S] cluster: C314, C317, C348, and E355.

It belongs to the IspG family. [4Fe-4S] cluster serves as cofactor.

The catalysed reaction is (2E)-4-hydroxy-3-methylbut-2-enyl diphosphate + 2 oxidized [2Fe-2S]-[ferredoxin] + H2O = 2-C-methyl-D-erythritol 2,4-cyclic diphosphate + 2 reduced [2Fe-2S]-[ferredoxin] + H(+). It participates in isoprenoid biosynthesis; isopentenyl diphosphate biosynthesis via DXP pathway; isopentenyl diphosphate from 1-deoxy-D-xylulose 5-phosphate: step 5/6. Its function is as follows. Converts 2C-methyl-D-erythritol 2,4-cyclodiphosphate (ME-2,4cPP) into 1-hydroxy-2-methyl-2-(E)-butenyl 4-diphosphate. This chain is 4-hydroxy-3-methylbut-2-en-1-yl diphosphate synthase (ferredoxin), found in Prochlorococcus marinus (strain MIT 9313).